The chain runs to 673 residues: MALKRGLSGVNRIRGSGGGSRSVLVLLIFFCVFAPLCFFVGRGVYIDSSNDYSIVSVKQNLDWRERLAMQSVRSLFSKEILDVIATSTADLGPLSLDSFKKNNLSASWRGTGVDPSFRHSENPATPDVKSNNLNEKRDSISKDSIHQKVETPTKIHRRQLREKRREMRANELVQHNDDTILKLENAAIERSKSVDSAVLGKYSIWRRENENDNSDSNIRLMRDQVIMARVYSGIAKLKNKNDLLQELQARLKDSQRVLGEATSDADLPRSAHEKLRAMGQVLAKAKMQLYDCKLVTGKLRAMLQTADEQVRSLKKQSTFLAQLAAKTIPNPIHCLSMRLTIDYYLLSPEKRKFPRSENLENPNLYHYALFSDNVLAASVVVNSTIMNAKDPSKHVFHLVTDKLNFGAMNMWFLLNPPGKATIHVENVDEFKWLNSSYCPVLRQLESAAMREYYFKADHPTSGSSNLKYRNPKYLSMLNHLRFYLPEVYPKLNKILFLDDDIIVQKDLTPLWEVNLNGKVNGAVETCGESFHRFDKYLNFSNPHIARNFNPNACGWAYGMNMFDLKEWKKRDITGIYHKWQNMNENRTLWKLGTLPPGLITFYGLTHPLNKAWHVLGLGYNPSIDKKDIENAAVVHYNGNMKPWLELAMSKYRPYWTKYIKFDHPYLRRCNLHE.

Topologically, residues 1–22 are cytoplasmic; that stretch reads MALKRGLSGVNRIRGSGGGSRS. Residues 23-43 form a helical; Signal-anchor for type II membrane protein membrane-spanning segment; that stretch reads VLVLLIFFCVFAPLCFFVGRG. At 44 to 673 the chain is on the lumenal side; the sequence is VYIDSSNDYS…PYLRRCNLHE (630 aa). Asn103 is a glycosylation site (N-linked (GlcNAc...) asparagine). Residues 112-136 are disordered; the sequence is GVDPSFRHSENPATPDVKSNNLNEK. N-linked (GlcNAc...) asparagine glycans are attached at residues Asn382, Asn434, Asn538, and Asn585.

It belongs to the glycosyltransferase 8 family. As to expression, expressed in seedlings, inflorescences, flowers, siliques, pollen, roots, stems and leaves.

It is found in the golgi apparatus membrane. It carries out the reaction [(1-&gt;4)-alpha-D-galacturonosyl](n) + UDP-alpha-D-galacturonate = [(1-&gt;4)-alpha-D-galacturonosyl](n+1) + UDP + H(+). It participates in glycan metabolism; pectin biosynthesis. Functionally, involved in pectin biosynthesis. Catalyzes the transfer of galacturonic acid from uridine 5'-diphosphogalacturonic acid onto the pectic polysaccharide homogalacturonan. The protein is Polygalacturonate 4-alpha-galacturonosyltransferase (GAUT1) of Arabidopsis thaliana (Mouse-ear cress).